The chain runs to 208 residues: MGVTVVSHPLVQHKLTIMRKKETSTASFRRLLKEISLLLCYEVTRDLELTTMPIETPLMPMDAPVLEGKKLVFASILRAGNGLLEGMLDLVPAARVAHIGLYRDHDTLQPVEYYFKAPEDIVNRLIIVVDPMLATGHSAIAAIDKLKERGATNIRFLCLLAAPEGIKRFTEAHPDVDVFTASIDERLDEKGYIVPGLGDAGDRMYGTK.

5-phospho-alpha-D-ribose 1-diphosphate contacts are provided by residues Arg78, Arg103, and Asp130–Ser138. Uracil contacts are provided by residues Ile193 and Gly198–Ala200. Asp199 serves as a coordination point for 5-phospho-alpha-D-ribose 1-diphosphate.

This sequence belongs to the UPRTase family. Mg(2+) is required as a cofactor.

It catalyses the reaction UMP + diphosphate = 5-phospho-alpha-D-ribose 1-diphosphate + uracil. It functions in the pathway pyrimidine metabolism; UMP biosynthesis via salvage pathway; UMP from uracil: step 1/1. With respect to regulation, allosterically activated by GTP. Functionally, catalyzes the conversion of uracil and 5-phospho-alpha-D-ribose 1-diphosphate (PRPP) to UMP and diphosphate. The sequence is that of Uracil phosphoribosyltransferase from Brucella anthropi (strain ATCC 49188 / DSM 6882 / CCUG 24695 / JCM 21032 / LMG 3331 / NBRC 15819 / NCTC 12168 / Alc 37) (Ochrobactrum anthropi).